Reading from the N-terminus, the 222-residue chain is uncharacterized protein (222 aa).

N-linked (GlcNAc...) asparagine; by host glycosylation is found at Asn4, Asn75, Asn84, Asn104, Asn170, and Asn175. The chain crosses the membrane as a helical span at residues 200-220; that stretch reads LIIIIGIVIILLLIIVMIKTV.

The protein localises to the membrane. This is an uncharacterized protein from Acanthamoeba polyphaga (Amoeba).